The primary structure comprises 87 residues: Serine protease inhibitor Kazal-type 12 (87 aa).

A signal peptide spans Met1–Ala22. The region spanning Gly26–Cys87 is the Kazal-like domain. 3 disulfides stabilise this stretch: Cys32-Cys68, Cys46-Cys65, and Cys54-Cys87.

As to expression, expressed in epydiymis, in the caput.

Its subcellular location is the secreted. Its function is as follows. Inhibits trypsin. The polypeptide is Serine protease inhibitor Kazal-type 12 (Spink12) (Mus musculus (Mouse)).